The primary structure comprises 1164 residues: MAVSRATKVSAASNMMSGIPGAPKRVSFANIREPLEVPDLLDLQVQSFEWLVGDETWFQRRVDAGDENPVGGLEEVLSEISPIEDFSGSMSLSFSDPRFDEVKASVEECKDKDMTYAAPLFVTAEFTNHTTGEIKSQTVFMGDFPVMTDKGTFIINGTERVVVSQLVRSPGVYFDQSVDKTTDKDVYSVKIIPSRGAWLEFDVDKRDTVGVRIDRKRRQPVTVLLKALGWTAEAIRERFGFSETLMATLEKDHTAGQDEALLDIYRKLRPGEPPTKESAQTLLENLFFKEKRYDLARVGRYKVNKKLGLDLPFESGVLTEEDIVTTIEYLVRLHAGEAEMPDRGQGGDATIPVEVDDIDHFGNRRLRTVGELIQNQVRVGLSRMERVVRERMTTQDVEAITPQTLINIRPVVAAIKEFFGTSQLSQFMDQTNPIAGLTHKRRLSALGPGGLSRERAGMEVRDVHPSHYGRMCPIETPEGPNIGLIGSLATFARVNPFGFIETPYRKVVDGRVTDQIDYLTADEEDRFVKAQANTPIDDEGNFLADRVLGRRKGGEVELLAPTEIDYMDVSPRQMVSAATAMIPFLEHDDANRALMGANMQRQAVPLLRSEAPLVGTGMELRAAVDAGDVVTAEKAGVIEELCADYITVMADDGTRRTYRLQKFSRSNHGTCTNQKPIVNEGDRVEAGQVIADGPCTQNGEMALGKNLRVAIMPWEGHNYEDAIILSQRLVQDDVLTSIHIEEHEVDARDTKLGAEEITRDIPNVSEDVLADLDERGIIRIGAEVQGGDILVGKVTPKGETELTPEERLLRAIFGEKAREVRDTSLKVPHGETGKVIGVRVFNREDDDELPPGVNELVRVYVAQKRKIQDGDKLAGRHGNKGVIGKILPAEDMPFTEDGTPVDIILNTHGVPRRMNIGQILETHLGWIASQGWSIDGDPEWAKRLPEELYDVDPGTNTASPVFDGAREEEITGLLASTKPNRDGERMVKANGKAQLFDGRSGEPYPYPVAVGYMYILKLSHLVDDKIHARSTGPYSMITQQPLGGKAQFGGQRFGEMECWAMQAYGAAYTLQELLTIKSDDVVGRVKVYEAIVKGENIPEPGIPESFKVLLKELQSLCLNVEVLSSDGAAIEMRDGDDEDLERAAANLGINLSRNESPSVDDVVQ.

This sequence belongs to the RNA polymerase beta chain family. As to quaternary structure, the RNAP catalytic core consists of 2 alpha, 1 beta, 1 beta' and 1 omega subunit. When a sigma factor is associated with the core the holoenzyme is formed, which can initiate transcription.

It catalyses the reaction RNA(n) + a ribonucleoside 5'-triphosphate = RNA(n+1) + diphosphate. In terms of biological role, DNA-dependent RNA polymerase catalyzes the transcription of DNA into RNA using the four ribonucleoside triphosphates as substrates. The sequence is that of DNA-directed RNA polymerase subunit beta from Saccharopolyspora erythraea (strain ATCC 11635 / DSM 40517 / JCM 4748 / NBRC 13426 / NCIMB 8594 / NRRL 2338).